A 409-amino-acid polypeptide reads, in one-letter code: Elongation factor Tu, chloroplastic (409 aa).

One can recognise a tr-type G domain in the interval 10 to 214 (KQHVNIGTIG…NVDTYIPTPV (205 aa)). Residues 19-26 (GHVDHGKT) form a G1 region. 19–26 (GHVDHGKT) is a binding site for GTP. Position 26 (Thr-26) interacts with Mg(2+). The tract at residues 60–64 (GITIN) is G2. The G3 stretch occupies residues 81–84 (DCPG). Residues 81–85 (DCPGH) and 136–139 (NKED) contribute to the GTP site. The interval 136–139 (NKED) is G4. A G5 region spans residues 174–176 (SAL).

It belongs to the TRAFAC class translation factor GTPase superfamily. Classic translation factor GTPase family. EF-Tu/EF-1A subfamily.

It is found in the plastid. Its subcellular location is the chloroplast. The enzyme catalyses GTP + H2O = GDP + phosphate + H(+). Its function is as follows. GTP hydrolase that promotes the GTP-dependent binding of aminoacyl-tRNA to the A-site of ribosomes during protein biosynthesis. The chain is Elongation factor Tu, chloroplastic (tufA) from Tupiella akineta (Green alga).